We begin with the raw amino-acid sequence, 194 residues long: GTP cyclohydrolase 1 (194 aa).

Zn(2+)-binding residues include C83, H86, and C155.

This sequence belongs to the GTP cyclohydrolase I family. As to quaternary structure, homomer.

The catalysed reaction is GTP + H2O = 7,8-dihydroneopterin 3'-triphosphate + formate + H(+). It participates in cofactor biosynthesis; 7,8-dihydroneopterin triphosphate biosynthesis; 7,8-dihydroneopterin triphosphate from GTP: step 1/1. This chain is GTP cyclohydrolase 1, found in Streptococcus pyogenes serotype M49 (strain NZ131).